Here is a 281-residue protein sequence, read N- to C-terminus: Tryptophan synthase alpha chain (281 aa).

Active-site proton acceptor residues include E49 and D60.

This sequence belongs to the TrpA family. As to quaternary structure, tetramer of two alpha and two beta chains.

The catalysed reaction is (1S,2R)-1-C-(indol-3-yl)glycerol 3-phosphate + L-serine = D-glyceraldehyde 3-phosphate + L-tryptophan + H2O. Its pathway is amino-acid biosynthesis; L-tryptophan biosynthesis; L-tryptophan from chorismate: step 5/5. Functionally, the alpha subunit is responsible for the aldol cleavage of indoleglycerol phosphate to indole and glyceraldehyde 3-phosphate. The protein is Tryptophan synthase alpha chain of Methanocaldococcus jannaschii (strain ATCC 43067 / DSM 2661 / JAL-1 / JCM 10045 / NBRC 100440) (Methanococcus jannaschii).